We begin with the raw amino-acid sequence, 113 residues long: uncharacterized protein (113 aa).

2 helical membrane-spanning segments follow: residues 1–21 (MLIA…FGTW) and 48–68 (IMLA…ALIV).

To M.tuberculosis Rv0039.

The protein localises to the cell membrane. This is an uncharacterized protein from Mycobacterium leprae (strain TN).